A 43-amino-acid polypeptide reads, in one-letter code: Protein PsbN (43 aa).

The chain crosses the membrane as a helical span at residues 5–27 (TLVAISISCLLVSFTGYALYTAF).

It belongs to the PsbN family.

The protein localises to the plastid. Its subcellular location is the chloroplast thylakoid membrane. May play a role in photosystem I and II biogenesis. The polypeptide is Protein PsbN (Cedrus deodara (Deodar cedar)).